We begin with the raw amino-acid sequence, 942 residues long: Isoleucine--tRNA ligase (942 aa).

The short motif at 58 to 68 is the 'HIGH' region element; that stretch reads PYVNGSIHLGH. An L-isoleucyl-5'-AMP-binding site is contributed by Glu564. A 'KMSKS' region motif is present at residues 605–609; the sequence is KMSKS. Lys608 is an ATP binding site. The Zn(2+) site is built by Cys905, Cys908, Cys925, and Cys928.

It belongs to the class-I aminoacyl-tRNA synthetase family. IleS type 1 subfamily. In terms of assembly, monomer. Zn(2+) serves as cofactor.

The protein localises to the cytoplasm. It carries out the reaction tRNA(Ile) + L-isoleucine + ATP = L-isoleucyl-tRNA(Ile) + AMP + diphosphate. In terms of biological role, catalyzes the attachment of isoleucine to tRNA(Ile). As IleRS can inadvertently accommodate and process structurally similar amino acids such as valine, to avoid such errors it has two additional distinct tRNA(Ile)-dependent editing activities. One activity is designated as 'pretransfer' editing and involves the hydrolysis of activated Val-AMP. The other activity is designated 'posttransfer' editing and involves deacylation of mischarged Val-tRNA(Ile). In Blochmanniella pennsylvanica (strain BPEN), this protein is Isoleucine--tRNA ligase.